We begin with the raw amino-acid sequence, 313 residues long: Proline iminopeptidase (313 aa).

Residues 35-298 enclose the AB hydrolase-1 domain; the sequence is KPVVILHGGP…TPGAGHSAFE (264 aa). Ser-110 acts as the Nucleophile in catalysis. Asp-266 is a catalytic residue. His-294 acts as the Proton donor in catalysis.

It belongs to the peptidase S33 family.

It is found in the cytoplasm. The catalysed reaction is Release of N-terminal proline from a peptide.. Its function is as follows. Specifically catalyzes the removal of N-terminal proline residues from peptides. This Xylella fastidiosa (strain 9a5c) protein is Proline iminopeptidase (pip).